The primary structure comprises 311 residues: ATP synthase gamma chain (311 aa).

This sequence belongs to the ATPase gamma chain family. In terms of assembly, F-type ATPases have 2 components, CF(1) - the catalytic core - and CF(0) - the membrane proton channel. CF(1) has five subunits: alpha(3), beta(3), gamma(1), delta(1), epsilon(1). CF(0) has three main subunits: a, b and c.

The protein localises to the cell membrane. Produces ATP from ADP in the presence of a proton gradient across the membrane. The gamma chain is believed to be important in regulating ATPase activity and the flow of protons through the CF(0) complex. The polypeptide is ATP synthase gamma chain (Limosilactobacillus fermentum (strain NBRC 3956 / LMG 18251) (Lactobacillus fermentum)).